The chain runs to 368 residues: Phosphoserine aminotransferase (368 aa).

Arginine 44 is a binding site for L-glutamate. Pyridoxal 5'-phosphate contacts are provided by residues 78–79 (AT), tryptophan 104, threonine 157, aspartate 179, and glutamine 202. An N6-(pyridoxal phosphate)lysine modification is found at lysine 203. Residue 244–245 (NT) participates in pyridoxal 5'-phosphate binding.

The protein belongs to the class-V pyridoxal-phosphate-dependent aminotransferase family. SerC subfamily. Homodimer. Pyridoxal 5'-phosphate serves as cofactor.

Its subcellular location is the cytoplasm. The catalysed reaction is O-phospho-L-serine + 2-oxoglutarate = 3-phosphooxypyruvate + L-glutamate. It catalyses the reaction 4-(phosphooxy)-L-threonine + 2-oxoglutarate = (R)-3-hydroxy-2-oxo-4-phosphooxybutanoate + L-glutamate. Its pathway is amino-acid biosynthesis; L-serine biosynthesis; L-serine from 3-phospho-D-glycerate: step 2/3. It functions in the pathway cofactor biosynthesis; pyridoxine 5'-phosphate biosynthesis; pyridoxine 5'-phosphate from D-erythrose 4-phosphate: step 3/5. Catalyzes the reversible conversion of 3-phosphohydroxypyruvate to phosphoserine and of 3-hydroxy-2-oxo-4-phosphonooxybutanoate to phosphohydroxythreonine. This chain is Phosphoserine aminotransferase, found in Neisseria meningitidis serogroup A / serotype 4A (strain DSM 15465 / Z2491).